We begin with the raw amino-acid sequence, 435 residues long: Protein lin-54 (435 aa).

The segment at 73-136 (DEPIDTSSHR…PASLPRTVQP (64 aa)) is disordered. The span at 102-120 (TPGSSQYTVRNLSNLSGSP) shows a compositional bias: polar residues. In terms of domain architecture, CRC spans 173-288 (QRKPCNCTKS…KCKGCQNTET (116 aa)). Positions 175-188 (KPCNCTKSQCLKLY) are DNA-binding. Residues cysteine 177, cysteine 179, cysteine 184, cysteine 189, cysteine 191, cysteine 198, cysteine 201, cysteine 203, and cysteine 206 each contribute to the Zn(2+) site. The segment at 235 to 250 (IGIARGGITDIERLHQ) is linker. Positions 253, 255, 260, 265, 267, 274, 278, 280, and 283 each coordinate Zn(2+). The segment at 253–266 (CHCKKSGCLKNYCE) is DNA-binding. Residues 415–435 (LTQDLDAAPTDDIPGPSTSTS) are disordered.

It belongs to the lin-54 family. As to quaternary structure, component of the DRM complex, at least composed of lin-9, lin-35, lin-37, lin-52, lin-53, lin-54- dpl-1 and efl-1.

The protein localises to the nucleus. It localises to the chromosome. Its function is as follows. Synthetic multivulva class B (synMuvB) protein. SynMuvB proteins are required to repress the induction of vulval development by Ras signaling and probably act by forming the multiprotein DRM complex that repress transcription. In Caenorhabditis elegans, this protein is Protein lin-54.